We begin with the raw amino-acid sequence, 232 residues long: Orotidine 5'-phosphate decarboxylase (232 aa).

Substrate-binding positions include Asp-10, Lys-32, 59 to 68 (DLKFHDIPNT), Thr-119, Arg-180, Gln-189, Gly-209, and Arg-210. The active-site Proton donor is the Lys-61.

It belongs to the OMP decarboxylase family. Type 1 subfamily. In terms of assembly, homodimer.

It carries out the reaction orotidine 5'-phosphate + H(+) = UMP + CO2. It participates in pyrimidine metabolism; UMP biosynthesis via de novo pathway; UMP from orotate: step 2/2. Functionally, catalyzes the decarboxylation of orotidine 5'-monophosphate (OMP) to uridine 5'-monophosphate (UMP). The polypeptide is Orotidine 5'-phosphate decarboxylase (Actinobacillus succinogenes (strain ATCC 55618 / DSM 22257 / CCUG 43843 / 130Z)).